A 207-amino-acid polypeptide reads, in one-letter code: uncharacterized protein (207 aa).

Residues 177–197 (LILAIGFIIGILLPTFFILLG) form a helical membrane-spanning segment.

The protein localises to the membrane. This is an uncharacterized protein from Haemophilus influenzae (strain ATCC 51907 / DSM 11121 / KW20 / Rd).